A 131-amino-acid polypeptide reads, in one-letter code: MKKHGVLNSEIASVLASLGHTDTIVIADCGLPIPAGVKRIDLAVEIGKPSFLDVLQVVADDMAIEKVTLAEEVINNNVEVNKEIELKLIEPAFEYVCHEQFKEHTKKAKAIIRTGEATPYANVILHAGVIF.

Residue His-20 is the Proton donor of the active site. Substrate-binding positions include Asp-28, His-98, and Tyr-120–Asn-122.

The protein belongs to the RbsD / FucU family. RbsD subfamily. In terms of assembly, homodecamer.

The protein localises to the cytoplasm. It catalyses the reaction beta-D-ribopyranose = beta-D-ribofuranose. Its pathway is carbohydrate metabolism; D-ribose degradation; D-ribose 5-phosphate from beta-D-ribopyranose: step 1/2. Its function is as follows. Catalyzes the interconversion of beta-pyran and beta-furan forms of D-ribose. This chain is D-ribose pyranase, found in Bacillus thuringiensis (strain Al Hakam).